Reading from the N-terminus, the 233-residue chain is Probable flavin reductase (233 aa).

Residues methionine 1–proline 133 form the FAD-binding FR-type domain. Glycine 111–methionine 115 lines the pyridine pocket.

This sequence belongs to the Fre/LuxG FAD/NAD(P) flavoprotein oxidoreductase family.

In terms of biological role, probable flavin reductase in the luminescent systems of different marine bacteria. This is Probable flavin reductase (luxG) from Vibrio harveyi (Beneckea harveyi).